The following is a 189-amino-acid chain: Movement protein (189 aa).

This sequence belongs to the tombusvirus/aureusvirus movement protein p22 family. As to quaternary structure, interacts with host protein HFI22. In terms of processing, phosphorylated.

Its subcellular location is the host membrane. In terms of biological role, transports viral genome to neighboring plant cells directly through plasmosdesmata, without any budding. The movement protein allows efficient cell to cell propagation, by bypassing the host cell wall barrier. The chain is Movement protein from Capsicum annuum (Capsicum pepper).